Consider the following 66-residue polypeptide: Conotoxin Lt3.5 (66 aa).

The first 20 residues, methionine 1 to alanine 20, serve as a signal peptide directing secretion. A propeptide spanning residues valine 21–arginine 53 is cleaved from the precursor. Intrachain disulfides connect cysteine 54–cysteine 66, cysteine 55–cysteine 62, and cysteine 59–cysteine 65. Proline 64 is modified (4-hydroxyproline).

Belongs to the conotoxin M superfamily. Expressed by the venom duct.

Its subcellular location is the secreted. This chain is Conotoxin Lt3.5, found in Conus litteratus (Lettered cone).